The following is a 316-amino-acid chain: MAKTEAPSLVGKLETEVEIKASAGQFHHMFAGKPHHVSKASPGNIQSCDLHEGDWGTVGSIVFWNYVHDGEAKVAKERIEAVEPEKNLITFRVIEGDLMKEYKSFLITIQVTPKHGGPGSIVHWHLEYEKISDEVAHPETLLQFCVEVSQEIDEHLLSEEEEVKTTETLETEVEIKASAEKFHHMFAGKPHHVSKATPGNIQSCDLHEGDWGTVGSIVFWNYVHDGEAKVAKERIEAVDPEKNLITFRVIEGDLMKEYKSFVITIQVTPKHGGSGSVVHWHFEYEKINEEVAHPETLLQFAVEVSKEIDEHLLAEE.

It belongs to the MLP family.

This is MLP-like protein 34 (MLP34) from Arabidopsis thaliana (Mouse-ear cress).